We begin with the raw amino-acid sequence, 752 residues long: Lid2 complex component jmj3 (752 aa).

In terms of domain architecture, JmjN spans 34 to 75 (IPVVEPKISEFVDMESFIRRVERLGKKYGAIKVVRPSSVLNP). The region spanning 162 to 333 (YTNRPSIPFY…NYEFSNLRRL (172 aa)) is the JmjC domain. Polar residues-rich tracts occupy residues 391–402 (SFSQRDFDSPNS) and 409–423 (LMSN…HFNS). Residues 391–438 (SFSQRDFDSPNSINPPSPLMSNHESASTEHFNSTTTTEKELSSLHVGE) form a disordered region. The span at 427–438 (TEKELSSLHVGE) shows a compositional bias: basic and acidic residues.

Component of the Lid2 complex composed of ash2, jmj3, lid2, sdc1 and snt2.

The protein resides in the nucleus. In Schizosaccharomyces pombe (strain 972 / ATCC 24843) (Fission yeast), this protein is Lid2 complex component jmj3.